A 493-amino-acid polypeptide reads, in one-letter code: 3-octaprenyl-4-hydroxybenzoate carboxy-lyase (493 aa).

Residue Asn172 participates in Mn(2+) binding. Residues 175–177, 189–191, and 194–195 contribute to the prenylated FMN site; these read IYR, RWL, and RG. Glu238 contributes to the Mn(2+) binding site. Residue Asp287 is the Proton donor of the active site.

It belongs to the UbiD family. In terms of assembly, homohexamer. It depends on prenylated FMN as a cofactor. The cofactor is Mn(2+).

The protein localises to the cell membrane. It catalyses the reaction a 4-hydroxy-3-(all-trans-polyprenyl)benzoate + H(+) = a 2-(all-trans-polyprenyl)phenol + CO2. It participates in cofactor biosynthesis; ubiquinone biosynthesis. Catalyzes the decarboxylation of 3-octaprenyl-4-hydroxy benzoate to 2-octaprenylphenol, an intermediate step in ubiquinone biosynthesis. This Shewanella baltica (strain OS155 / ATCC BAA-1091) protein is 3-octaprenyl-4-hydroxybenzoate carboxy-lyase.